The sequence spans 90 residues: Small ribosomal subunit protein bS16 (90 aa).

The protein belongs to the bacterial ribosomal protein bS16 family.

The chain is Small ribosomal subunit protein bS16 from Streptococcus pneumoniae serotype 19F (strain G54).